The following is a 181-amino-acid chain: ATP-dependent protease subunit HslV (181 aa).

Thr7 is a catalytic residue. 3 residues coordinate Na(+): Ala165, Cys168, and Thr171.

It belongs to the peptidase T1B family. HslV subfamily. A double ring-shaped homohexamer of HslV is capped on each side by a ring-shaped HslU homohexamer. The assembly of the HslU/HslV complex is dependent on binding of ATP.

Its subcellular location is the cytoplasm. It carries out the reaction ATP-dependent cleavage of peptide bonds with broad specificity.. With respect to regulation, allosterically activated by HslU binding. In terms of biological role, protease subunit of a proteasome-like degradation complex believed to be a general protein degrading machinery. This chain is ATP-dependent protease subunit HslV, found in Lysinibacillus sphaericus (strain C3-41).